Here is a 265-residue protein sequence, read N- to C-terminus: Phosphonates import ATP-binding protein PhnC 1 (265 aa).

Residues 7 to 252 (IEVSNLSKSF…KLNEIYGTAA (246 aa)) form the ABC transporter domain. 39–46 (GASGSGKS) is a binding site for ATP.

It belongs to the ABC transporter superfamily. Phosphonates importer (TC 3.A.1.9.1) family. In terms of assembly, the complex is composed of two ATP-binding proteins (PhnC), two transmembrane proteins (PhnE) and a solute-binding protein (PhnD).

Its subcellular location is the cell inner membrane. It catalyses the reaction phosphonate(out) + ATP + H2O = phosphonate(in) + ADP + phosphate + H(+). Functionally, part of the ABC transporter complex PhnCDE involved in phosphonates import. Responsible for energy coupling to the transport system. This is Phosphonates import ATP-binding protein PhnC 1 from Nostoc sp. (strain PCC 7120 / SAG 25.82 / UTEX 2576).